The sequence spans 146 residues: Core protein OPG114 (146 aa).

The protein belongs to the orthopoxvirus OPG114 family. In terms of assembly, part of a complex composed of the kinase OPG054, OPG092, OPG100, OPG114, OPG115, OPG142 and OPG157.

It is found in the virion. Functionally, late protein which is part of a large complex required for early virion morphogenesis. This complex participates in the formation of virosomes and the incorporation of virosomal contents into nascent immature virions. This chain is Core protein OPG114 (OPG114), found in Monkeypox virus.